A 417-amino-acid chain; its full sequence is Histidine--tRNA ligase (417 aa).

This sequence belongs to the class-II aminoacyl-tRNA synthetase family. In terms of assembly, homodimer.

It localises to the cytoplasm. The enzyme catalyses tRNA(His) + L-histidine + ATP = L-histidyl-tRNA(His) + AMP + diphosphate + H(+). This chain is Histidine--tRNA ligase, found in Caldanaerobacter subterraneus subsp. tengcongensis (strain DSM 15242 / JCM 11007 / NBRC 100824 / MB4) (Thermoanaerobacter tengcongensis).